Here is a 204-residue protein sequence, read N- to C-terminus: Lysozyme G (204 aa).

An N-terminal signal peptide occupies residues 1–19 (MHLMLVLLGLAALLGTSQS). 2 disulfide bridges follow: Cys-23–Cys-79 and Cys-37–Cys-48. Catalysis depends on residues Glu-92 and Asp-105.

It belongs to the glycosyl hydrolase 23 family.

It localises to the secreted. The enzyme catalyses Hydrolysis of (1-&gt;4)-beta-linkages between N-acetylmuramic acid and N-acetyl-D-glucosamine residues in a peptidoglycan and between N-acetyl-D-glucosamine residues in chitodextrins.. In terms of biological role, has bacteriolytic activity against M.luteus. The polypeptide is Lysozyme G (Dromaius novaehollandiae (Emu)).